The chain runs to 315 residues: Taste receptor type 2 member 129 (315 aa).

Residues 1–9 are Extracellular-facing; sequence MDGIIQIIS. Residues 10 to 30 traverse the membrane as a helical segment; it reads AFIVIIEIIIGWFGNGFIVLV. Residues 31-46 are Cytoplasmic-facing; it reads NCMHWIKRRRISTVNQ. The chain crosses the membrane as a helical span at residues 47-67; the sequence is ILTALAFSRIYLLLTVFTVIL. Residues 68 to 101 lie on the Extracellular side of the membrane; it reads ASVQYSNILVTRREVKVIIFHLITSNHFSMWLAA. A helical membrane pass occupies residues 102–122; it reads CLGLFYFLKIANFSNFIFVFL. Residues 123–128 are Cytoplasmic-facing; that stretch reads KKRVNK. Residues 129 to 149 traverse the membrane as a helical segment; sequence VVSGTLLMSLVFLFLNTLLIN. At 150–185 the chain is on the extracellular side; the sequence is SYIDAQIDDYRGYLLYDFTSNITVSFYRVILVINNC. N-linked (GlcNAc...) asparagine glycosylation is present at Asn-170. Residues 186–206 traverse the membrane as a helical segment; that stretch reads IFTSIPFALSQSTFLMLIFSL. Residues 207-233 are Cytoplasmic-facing; it reads WRHYKKMQQHAQRCRDTLTNAHIKVLQ. The helical transmembrane segment at 234–254 threads the bilayer; sequence TMIMYVLLSAIFFLFLSMQIW. Residues 255 to 266 lie on the Extracellular side of the membrane; sequence RNKLMENILFIR. Residues 267–287 traverse the membrane as a helical segment; sequence FCETVAAVFPSGHSCVLIWGD. Topologically, residues 288-315 are cytoplasmic; the sequence is TNLRQTFLSVLWWLKHRFTLWVPKLYCR.

The protein belongs to the G-protein coupled receptor T2R family.

It localises to the membrane. Its function is as follows. Putative taste receptor which may play a role in the perception of bitterness. This Rattus norvegicus (Rat) protein is Taste receptor type 2 member 129.